Consider the following 33-residue polypeptide: Brevinin-2Rh (33 aa).

Cysteines 27 and 33 form a disulfide.

Expressed by the skin glands.

The protein resides in the secreted. Its function is as follows. Antimicrobial peptide. This chain is Brevinin-2Rh, found in Pelophylax ridibundus (Marsh frog).